A 114-amino-acid polypeptide reads, in one-letter code: Macrophage migration inhibitory factor homolog (114 aa).

Residue proline 2 is the Proton acceptor; via imino nitrogen of the active site. Substrate-binding residues include lysine 33 and asparagine 98.

Belongs to the MIF family.

The protein resides in the secreted. The catalysed reaction is L-dopachrome = 5,6-dihydroxyindole-2-carboxylate. The enzyme catalyses 3-phenylpyruvate = enol-phenylpyruvate. Tautomerization of the methyl ester of L-dopachrome. Inhibits migration of human peripheral blood mononuclear cells. This Trichuris trichiura (Whipworm) protein is Macrophage migration inhibitory factor homolog.